Consider the following 565-residue polypeptide: Wee1-like protein kinase 2 (565 aa).

2 disordered regions span residues 18–78 and 169–191; these read YCEE…KSPE and KSNG…GNVE. Acidic residues predominate over residues 19–29; sequence CEEESESEGQE. Over residues 31–51 the composition is skewed to basic and acidic residues; the sequence is WETRDAHSQIPDRAEGQESEA. Serine 76 carries the phosphoserine modification. Residues 173-175 carry the Nuclear localization signal motif; the sequence is KRK. The region spanning 214-492 is the Protein kinase domain; sequence FLEVEKIGVG…ARSRVLRPSL (279 aa). ATP-binding positions include 220-228 and lysine 243; that span reads IGVGEFGTV. Residues 317 to 331 carry the Nuclear export signal motif; that stretch reads KLKDILLQISLGLKY. Aspartate 341 (proton acceptor) is an active-site residue. Residues asparagine 346 and aspartate 382 each coordinate Mg(2+). Positions 495–521 form a coiled coil; that stretch reads AEELQQQLNLEKFKTATLERELREAQQ. The segment at 521–565 is disordered; it reads QAWFSQEERGDAGVSGTPTGSRSTKRLVGGKSAKSSSFTWGKSSP. Residues 553-565 are compositionally biased toward polar residues; that stretch reads AKSSSFTWGKSSP.

It belongs to the protein kinase superfamily. Ser/Thr protein kinase family. WEE1 subfamily. In terms of processing, phosphorylation leads to increase its activity.

The protein localises to the nucleus. It catalyses the reaction L-tyrosyl-[protein] + ATP = O-phospho-L-tyrosyl-[protein] + ADP + H(+). In terms of biological role, oocyte-specific protein tyrosine kinase that phosphorylates and inhibits CDK1 and acts as a key regulator of meiosis during both prophase I and metaphase II. Required to maintain meiotic arrest in oocytes during the germinal vesicle (GV) stage, a long period of quiescence at dictyate prophase I, by phosphorylating CDK1 at 'Tyr-15', leading to inhibit CDK1 activity and prevent meiotic reentry. Also required for metaphase II exit during egg activation by phosphorylating CDK1 at 'Tyr-15', to ensure exit from meiosis in oocytes and promote pronuclear formation. The protein is Wee1-like protein kinase 2 (WEE2) of Ailuropoda melanoleuca (Giant panda).